The chain runs to 288 residues: Cyclin-dependent kinase 2 homolog (288 aa).

The 281-residue stretch at 4-284 folds into the Protein kinase domain; it reads YHGLEKIGEG…AKQALEHAYF (281 aa). ATP contacts are provided by residues 10–18 and lysine 32; that span reads IGEGTYGVV. At threonine 14 the chain carries Phosphothreonine. Position 15 is a phosphotyrosine (tyrosine 15). The active-site Proton acceptor is the aspartate 125. The residue at position 158 (threonine 158) is a Phosphothreonine.

The protein belongs to the protein kinase superfamily. CMGC Ser/Thr protein kinase family. CDC2/CDKX subfamily. As to quaternary structure, may form a complex composed of at least the catalytic subunit CRK2 and a cyclin. Mg(2+) is required as a cofactor. Post-translationally, autophosphorylates in presence of cyclin cyc-1 but not in presence of cyclin cyc-3.

It is found in the cytoplasm. It carries out the reaction L-seryl-[protein] + ATP = O-phospho-L-seryl-[protein] + ADP + H(+). The catalysed reaction is L-threonyl-[protein] + ATP = O-phospho-L-threonyl-[protein] + ADP + H(+). It catalyses the reaction [DNA-directed RNA polymerase] + ATP = phospho-[DNA-directed RNA polymerase] + ADP + H(+). Phosphorylation at Thr-14 or Tyr-15 inactivates the enzyme, while phosphorylation at Thr-158 activates it. Activated by cyclin cyc-1 in vitro. Activated by cyclin cyc-3 in vitro. In terms of biological role, serine/threonine-protein kinase. Involved in the control of the cell cycle. Required for entry into S-phase and mitosis. Probable component of the kinase complex that phosphorylates the repetitive C-terminus of RNA polymerase II. In schizonts, phosphorylates ORC1 resulting in its dissociation from DNA, relocalization to the cytoplasm and likely its degradation. The chain is Cyclin-dependent kinase 2 homolog from Plasmodium falciparum (isolate 3D7).